A 498-amino-acid polypeptide reads, in one-letter code: uncharacterized protein (498 aa).

329–336 (GNPGTGKS) lines the ATP pocket.

Its subcellular location is the secreted. The protein localises to the cell wall. This is an uncharacterized protein from Mycobacterium tuberculosis (strain CDC 1551 / Oshkosh).